The following is a 656-amino-acid chain: UV-damage endonuclease (656 aa).

Disordered stretches follow at residues 1–82 (MPSR…GKEQ), 119–146 (PSVV…KEPV), 175–194 (IIEP…RPPA), 241–264 (PLQF…EPQD), 492–515 (EPCD…TLPP), 550–620 (DMVP…GPYN), and 636–656 (KREV…EFDG). Residues 13–32 (TPQSESSTFSSTLDSSAPSP) are compositionally biased toward low complexity. 2 stretches are compositionally biased toward basic and acidic residues: residues 48 to 82 (SEKD…GKEQ) and 135 to 146 (TNAEEREAKEPV). Over residues 550-561 (DMVPYDRDDENR) the composition is skewed to basic and acidic residues. The segment covering 568–579 (APKKKKGGKRKR) has biased composition (basic residues). Over residues 583-595 (EEAAEPEEVDTAA) the composition is skewed to acidic residues. Basic and acidic residues predominate over residues 596–614 (DDVKDAPEGPKEVPEEERA). Residues 647-656 (EVEDEGEFDG) show a composition bias toward acidic residues.

The protein belongs to the uve1/UvsE family. Mg(2+) is required as a cofactor.

Endonuclease for the repair of UV-irradiated DNA. Involved in the excision of cyclobutane pyrimidine dimers (CPD) and 6-4 pyrimidine pyrimidones (6-4PP) which forms the UV damage repair (UVDR) pathway. The chain is UV-damage endonuclease (mus-18) from Neurospora crassa (strain ATCC 24698 / 74-OR23-1A / CBS 708.71 / DSM 1257 / FGSC 987).